The following is a 171-amino-acid chain: Co-chaperone protein HscB (171 aa).

In terms of domain architecture, J spans 2-74 (DYFTLFGLPA…LTRAEYLLSL (73 aa)).

This sequence belongs to the HscB family. As to quaternary structure, interacts with HscA and stimulates its ATPase activity. Interacts with IscU.

In terms of biological role, co-chaperone involved in the maturation of iron-sulfur cluster-containing proteins. Seems to help targeting proteins to be folded toward HscA. The protein is Co-chaperone protein HscB of Salmonella typhimurium (strain LT2 / SGSC1412 / ATCC 700720).